The primary structure comprises 234 residues: Purine nucleoside phosphorylase DeoD-type (234 aa).

His-4 is an a purine D-ribonucleoside binding site. Phosphate contacts are provided by residues Gly-20, Arg-24, Arg-43, and 87–90 (RVGT). Residues Glu-162, 178–180 (EME), and 202–203 (SD) contribute to the a purine D-ribonucleoside site. Asp-203 serves as the catalytic Proton donor.

This sequence belongs to the PNP/UDP phosphorylase family. In terms of assembly, homohexamer; trimer of homodimers.

The catalysed reaction is a purine D-ribonucleoside + phosphate = a purine nucleobase + alpha-D-ribose 1-phosphate. The enzyme catalyses a purine 2'-deoxy-D-ribonucleoside + phosphate = a purine nucleobase + 2-deoxy-alpha-D-ribose 1-phosphate. In terms of biological role, catalyzes the reversible phosphorolytic breakdown of the N-glycosidic bond in the beta-(deoxy)ribonucleoside molecules, with the formation of the corresponding free purine bases and pentose-1-phosphate. Functionally, cleavage of adenosine and its derivatives. The sequence is that of Purine nucleoside phosphorylase DeoD-type from Geobacillus stearothermophilus (Bacillus stearothermophilus).